Here is a 592-residue protein sequence, read N- to C-terminus: MIFVLTLVALCTAIHCPDGEVEVDGACYPSSCVFEDTVCNNHGTCTASVCRCDSGYSLGNQGCYPSICYLASDDVCNGHGKCVESEHGSYECSCDQGYINDYQVCVPEACYTEEGVCFGYGTCIQPTDGSAPYCRCYPANAGEKCTECSSEAVLIDGACVHKSCLTEFVPGETLVCNGLGRCMIMPFPNIHYVCSCYPYDGTFYNNTCIYNGCITEYNLYGITEVCSDRGICAGTRCVCDSGYNGPTCEYKVVDCEPGFVSAQETCYPEACISDESVCGGHGRCIWNNDGAACACNDGFVFYENTCIYASCIVNGIVCPHGTYDASMNPPRCICPTDYIGRNSVCYPSSCVTNSQTNPPQLCHSAGSCDFDTGVCSCNPTNSGPTCEECSSEATLIDGVCQPWSCIDERNPDALSVCSGKGTCIAYSGRDVFDVCYMCSCDSGYETVPGGICVPNSCVTASLIICSNRGTCTDGVCKCNEGYSGALCEWYQCPTGQTFVNNLCVHEECVTSYDDVAQTTSVCGGYGRCVEDDGSYKCSCRSDAKVIDGECVNESCITNSATNEVCSGHGKCNGYNCVCSVGYFGKHCNVKTL.

Residues 1 to 19 (MIFVLTLVALCTAIHCPDG) form the signal peptide. 6 EGF-like domains span residues 64-104 (YPSI…DYQV), 106-146 (VPEA…EKCT), 267-307 (YPEA…NTCI), 353-387 (NSQT…PTCE), 453-488 (VPNS…ALCE), and 546-588 (IDGE…KHCN). 15 disulfide bridges follow: Cys68-Cys82, Cys76-Cys92, Cys110-Cys123, Cys117-Cys134, Cys136-Cys145, Cys271-Cys284, Cys278-Cys293, Cys295-Cys306, Cys362-Cys375, Cys377-Cys386, Cys457-Cys471, Cys478-Cys487, Cys550-Cys565, Cys555-Cys576, and Cys578-Cys587. Asn552 is a glycosylation site (N-linked (GlcNAc...) asparagine).

This sequence belongs to the NOTCH family. Interacts with EB1.

It localises to the cell projection. It is found in the cilium. The protein localises to the flagellum. Its subcellular location is the cytoplasm. The protein resides in the cytoskeleton. It localises to the flagellum axoneme. This Giardia intestinalis (strain ATCC 50803 / WB clone C6) (Giardia lamblia) protein is Neurogenic locus notch homolog protein.